Consider the following 486-residue polypeptide: Ribulose bisphosphate carboxylase large chain (486 aa).

N125 and T175 together coordinate substrate. The active-site Proton acceptor is K177. K179 is a substrate binding site. Mg(2+)-binding residues include K203, D205, and E206. N6-carboxylysine is present on K203. Catalysis depends on H295, which acts as the Proton acceptor. Substrate-binding residues include R296, H328, and S380.

Belongs to the RuBisCO large chain family. Type I subfamily. In terms of assembly, heterohexadecamer of 8 large chains and 8 small chains. Mg(2+) serves as cofactor.

It catalyses the reaction 2 (2R)-3-phosphoglycerate + 2 H(+) = D-ribulose 1,5-bisphosphate + CO2 + H2O. The enzyme catalyses D-ribulose 1,5-bisphosphate + O2 = 2-phosphoglycolate + (2R)-3-phosphoglycerate + 2 H(+). Functionally, ruBisCO catalyzes two reactions: the carboxylation of D-ribulose 1,5-bisphosphate, the primary event in carbon dioxide fixation, as well as the oxidative fragmentation of the pentose substrate. Both reactions occur simultaneously and in competition at the same active site. The chain is Ribulose bisphosphate carboxylase large chain from Cereibacter sphaeroides (Rhodobacter sphaeroides).